Consider the following 209-residue polypeptide: Uracil phosphoribosyltransferase (209 aa).

Residues Arg-79, Arg-104, and 131 to 139 (DPMLATGGS) contribute to the 5-phospho-alpha-D-ribose 1-diphosphate site. Residues Ile-194 and 199–201 (GDA) each bind uracil. Asp-200 is a 5-phospho-alpha-D-ribose 1-diphosphate binding site.

It belongs to the UPRTase family. The cofactor is Mg(2+).

It carries out the reaction UMP + diphosphate = 5-phospho-alpha-D-ribose 1-diphosphate + uracil. The protein operates within pyrimidine metabolism; UMP biosynthesis via salvage pathway; UMP from uracil: step 1/1. Its activity is regulated as follows. Allosterically activated by GTP. Its function is as follows. Catalyzes the conversion of uracil and 5-phospho-alpha-D-ribose 1-diphosphate (PRPP) to UMP and diphosphate. The chain is Uracil phosphoribosyltransferase from Exiguobacterium sibiricum (strain DSM 17290 / CCUG 55495 / CIP 109462 / JCM 13490 / 255-15).